We begin with the raw amino-acid sequence, 125 residues long: UPF0102 protein Rpic_3463 (125 aa).

Belongs to the UPF0102 family.

This is UPF0102 protein Rpic_3463 from Ralstonia pickettii (strain 12J).